A 96-amino-acid polypeptide reads, in one-letter code: Putative defensin-like protein 236 (96 aa).

The signal sequence occupies residues 1–23; it reads MKNATSLIIYCFLMFLLMNNVKG. 4 disulfide bridges follow: cysteine 31/cysteine 93, cysteine 41/cysteine 70, cysteine 49/cysteine 83, and cysteine 68/cysteine 85.

This sequence belongs to the DEFL family.

The protein resides in the secreted. The protein is Putative defensin-like protein 236 (SCRL20) of Arabidopsis thaliana (Mouse-ear cress).